Here is a 639-residue protein sequence, read N- to C-terminus: UPF0313 protein CLJ_B0249 (639 aa).

Residues 295–566 form the Radical SAM core domain; it reads AIKEVKFSIT…RMQRSLLQFS (272 aa). Positions 309, 313, and 316 each coordinate [4Fe-4S] cluster. The tract at residues 597–639 is disordered; it reads YNKPYKKSHKKNNAKNKNNNYNKNKDVSKKNKKNSLSKHKKRK. Composition is skewed to basic residues over residues 600–610 and 626–639; these read PYKKSHKKNNA and KNKK…KKRK.

It belongs to the UPF0313 family. The cofactor is [4Fe-4S] cluster.

The polypeptide is UPF0313 protein CLJ_B0249 (Clostridium botulinum (strain 657 / Type Ba4)).